A 600-amino-acid polypeptide reads, in one-letter code: DNA mismatch repair protein MutL (600 aa).

Residues 327–405 are disordered; that stretch reads DGSRAATTGA…FSPQPAAAEP (79 aa). Positions 349 to 367 are enriched in polar residues; that stretch reads PNSQRPQTAWSAETSSSRP.

The protein belongs to the DNA mismatch repair MutL/HexB family.

This protein is involved in the repair of mismatches in DNA. It is required for dam-dependent methyl-directed DNA mismatch repair. May act as a 'molecular matchmaker', a protein that promotes the formation of a stable complex between two or more DNA-binding proteins in an ATP-dependent manner without itself being part of a final effector complex. The polypeptide is DNA mismatch repair protein MutL (Rhizobium johnstonii (strain DSM 114642 / LMG 32736 / 3841) (Rhizobium leguminosarum bv. viciae)).